Reading from the N-terminus, the 274-residue chain is Large ribosomal subunit protein uL2 (274 aa).

The interval 223-274 (VAMNPVDHPHGGGEGRTSGGRHPVTPWGVPTKGYKTRSNKRTDKYIVRRRNK) is disordered.

This sequence belongs to the universal ribosomal protein uL2 family. As to quaternary structure, part of the 50S ribosomal subunit. Forms a bridge to the 30S subunit in the 70S ribosome.

One of the primary rRNA binding proteins. Required for association of the 30S and 50S subunits to form the 70S ribosome, for tRNA binding and peptide bond formation. It has been suggested to have peptidyltransferase activity; this is somewhat controversial. Makes several contacts with the 16S rRNA in the 70S ribosome. The protein is Large ribosomal subunit protein uL2 of Shewanella putrefaciens (strain CN-32 / ATCC BAA-453).